We begin with the raw amino-acid sequence, 86 residues long: uncharacterized protein (86 aa).

This is an uncharacterized protein from Haemophilus influenzae (strain ATCC 51907 / DSM 11121 / KW20 / Rd).